A 150-amino-acid polypeptide reads, in one-letter code: Phosphoribosyl-AMP cyclohydrolase (150 aa).

Aspartate 93 provides a ligand contact to Mg(2+). Cysteine 94 provides a ligand contact to Zn(2+). The Mg(2+) site is built by aspartate 95 and aspartate 97. Zn(2+)-binding residues include cysteine 112 and cysteine 119.

It belongs to the PRA-CH family. As to quaternary structure, homodimer. The cofactor is Mg(2+). It depends on Zn(2+) as a cofactor.

Its subcellular location is the cytoplasm. It catalyses the reaction 1-(5-phospho-beta-D-ribosyl)-5'-AMP + H2O = 1-(5-phospho-beta-D-ribosyl)-5-[(5-phospho-beta-D-ribosylamino)methylideneamino]imidazole-4-carboxamide. Its pathway is amino-acid biosynthesis; L-histidine biosynthesis; L-histidine from 5-phospho-alpha-D-ribose 1-diphosphate: step 3/9. Catalyzes the hydrolysis of the adenine ring of phosphoribosyl-AMP. In Rhizobium leguminosarum bv. trifolii (strain WSM2304), this protein is Phosphoribosyl-AMP cyclohydrolase.